The primary structure comprises 305 residues: Protoheme IX farnesyltransferase (305 aa).

Transmembrane regions (helical) follow at residues 28–48 (IIEL…QGVP), 52–72 (LVLL…ALNM), 101–121 (LAFG…TVNW), 122–142 (LSAW…TMIL), 149–169 (NIVW…SSVT), 174–194 (WAPV…YWPL), 218–238 (VVAR…LLLT), 240–260 (LGYT…FWLW), and 283–303 (LFHW…VDPF).

It belongs to the UbiA prenyltransferase family. Protoheme IX farnesyltransferase subfamily.

The protein localises to the cell membrane. The catalysed reaction is heme b + (2E,6E)-farnesyl diphosphate + H2O = Fe(II)-heme o + diphosphate. It participates in porphyrin-containing compound metabolism; heme O biosynthesis; heme O from protoheme: step 1/1. Its function is as follows. Converts heme B (protoheme IX) to heme O by substitution of the vinyl group on carbon 2 of heme B porphyrin ring with a hydroxyethyl farnesyl side group. The sequence is that of Protoheme IX farnesyltransferase from Streptomyces avermitilis (strain ATCC 31267 / DSM 46492 / JCM 5070 / NBRC 14893 / NCIMB 12804 / NRRL 8165 / MA-4680).